We begin with the raw amino-acid sequence, 324 residues long: GDP-mannose transporter (324 aa).

Residues 1–13 lie on the Cytoplasmic side of the membrane; it reads MSELKSRIGNSGS. A helical membrane pass occupies residues 14 to 34; sequence IANSGPVSILCYCASSILMTV. At 35–44 the chain is on the lumenal side; it reads TNKFVVNTDG. Residues 45–65 form a helical membrane-spanning segment; the sequence is FNMFFVMLFAQSLVCTMCLMV. Residues 66–76 lie on the Cytoplasmic side of the membrane; it reads LKMFGYAKYRP. A helical membrane pass occupies residues 77-97; the sequence is LNLIDVKNWLPISFLLVFMIF. At 98 to 116 the chain is on the lumenal side; sequence TSAKALKYMPVPIYTIFKN. N-linked (GlcNAc...) asparagine glycosylation occurs at N116. The helical transmembrane segment at 117–137 threads the bilayer; the sequence is LTIILIAYGEVLFFGGSVTPM. E138 is a topological domain (cytoplasmic). A helical membrane pass occupies residues 139–159; the sequence is LSSFILMVLSSVVASLGDQQA. Residues 160 to 170 are Lumenal-facing; that stretch reads AKIAQPLANNS. N-linked (GlcNAc...) asparagine glycosylation is present at N168. A helical membrane pass occupies residues 171-191; it reads ILSPEYYWMFLNCICSASFVL. Residues 192-204 lie on the Cytoplasmic side of the membrane; it reads IMRKRIKLTNFKD. The chain crosses the membrane as a helical span at residues 205–225; it reads YDTMFYNNALALPILLGFSFL. Residues 226 to 243 are Lumenal-facing; the sequence is SEDWSSENLAQNFSGESL. N237 carries N-linked (GlcNAc...) asparagine glycosylation. A helical membrane pass occupies residues 244 to 264; sequence SAMIISGMTSVGISYCSGWCV. Residues 265–270 are Cytoplasmic-facing; sequence RATSST. A helical transmembrane segment spans residues 271-291; the sequence is TYSMVGALNKLPIALAGLIFF. Over 292-295 the chain is Lumenal; sequence DAPR. Residues 296–316 form a helical membrane-spanning segment; the sequence is NFLSIMSIFIGFASGLSYAVA. Residues 317–324 are Cytoplasmic-facing; the sequence is KQKKVQKN.

It belongs to the TPT transporter family. SLC35D subfamily. In terms of assembly, homooligomer.

It localises to the golgi apparatus membrane. Its subcellular location is the cytoplasmic vesicle membrane. The protein localises to the endoplasmic reticulum membrane. Functionally, involved in the import of GDP-mannose from the cytoplasm into the Golgi lumen. The sequence is that of GDP-mannose transporter (VRG4) from Candida glabrata (strain ATCC 2001 / BCRC 20586 / JCM 3761 / NBRC 0622 / NRRL Y-65 / CBS 138) (Yeast).